The sequence spans 506 residues: UDP-N-acetylmuramoyl-L-alanyl-D-glutamate--2,6-diaminopimelate ligase (506 aa).

Ser42 lines the UDP-N-acetyl-alpha-D-muramoyl-L-alanyl-D-glutamate pocket. 125-131 (GTSGKTT) serves as a coordination point for ATP. Residues 166-167 (TT), Ser193, and Arg201 each bind UDP-N-acetyl-alpha-D-muramoyl-L-alanyl-D-glutamate. Lys233 carries the post-translational modification N6-carboxylysine. Meso-2,6-diaminopimelate contacts are provided by residues Arg395, 419–422 (DNPR), Gly475, and Glu479. A Meso-diaminopimelate recognition motif motif is present at residues 419 to 422 (DNPR).

It belongs to the MurCDEF family. MurE subfamily. The cofactor is Mg(2+). Carboxylation is probably crucial for Mg(2+) binding and, consequently, for the gamma-phosphate positioning of ATP.

The protein resides in the cytoplasm. It catalyses the reaction UDP-N-acetyl-alpha-D-muramoyl-L-alanyl-D-glutamate + meso-2,6-diaminopimelate + ATP = UDP-N-acetyl-alpha-D-muramoyl-L-alanyl-gamma-D-glutamyl-meso-2,6-diaminopimelate + ADP + phosphate + H(+). It functions in the pathway cell wall biogenesis; peptidoglycan biosynthesis. In terms of biological role, catalyzes the addition of meso-diaminopimelic acid to the nucleotide precursor UDP-N-acetylmuramoyl-L-alanyl-D-glutamate (UMAG) in the biosynthesis of bacterial cell-wall peptidoglycan. The sequence is that of UDP-N-acetylmuramoyl-L-alanyl-D-glutamate--2,6-diaminopimelate ligase from Streptomyces coelicolor (strain ATCC BAA-471 / A3(2) / M145).